Consider the following 501-residue polypeptide: Phytoene desaturase (lycopene-forming) (501 aa).

12-45 (IVIGAGFGGLALAIRLQSAGIATTLVEARDKPGG) contributes to the FAD binding site.

The protein belongs to the carotenoid/retinoid oxidoreductase family. It depends on FAD as a cofactor.

The catalysed reaction is 15-cis-phytoene + 4 A = all-trans-lycopene + 4 AH2. It functions in the pathway carotenoid biosynthesis; astaxanthin biosynthesis. Its function is as follows. This enzyme converts phytoene into lycopene via the intermediaries of phytofluene, zeta-carotene and neurosporene by the introduction of four double bonds. The chain is Phytoene desaturase (lycopene-forming) (crtI) from Paracoccus sp. (strain N81106 / MBIC 01143) (Agrobacterium aurantiacum).